Reading from the N-terminus, the 443-residue chain is Probable D-serine dehydratase (443 aa).

The residue at position 116 (lysine 116) is an N6-(pyridoxal phosphate)lysine.

This sequence belongs to the serine/threonine dehydratase family. DsdA subfamily. Pyridoxal 5'-phosphate serves as cofactor.

The enzyme catalyses D-serine = pyruvate + NH4(+). The polypeptide is Probable D-serine dehydratase (Bacillus cereus (strain ATCC 14579 / DSM 31 / CCUG 7414 / JCM 2152 / NBRC 15305 / NCIMB 9373 / NCTC 2599 / NRRL B-3711)).